We begin with the raw amino-acid sequence, 263 residues long: Flagellar L-ring protein (263 aa).

Positions 1–15 (MKRLLCLLLLTTLTG) are cleaved as a signal peptide. A lipid anchor (N-palmitoyl cysteine) is attached at Cys-16. Residue Cys-16 is the site of S-diacylglycerol cysteine attachment. Residues 123–143 (KSADAELSKSNDSSMDPLQVG) form a disordered region.

Belongs to the FlgH family. As to quaternary structure, the basal body constitutes a major portion of the flagellar organelle and consists of four rings (L,P,S, and M) mounted on a central rod.

It localises to the cell outer membrane. It is found in the bacterial flagellum basal body. In terms of biological role, assembles around the rod to form the L-ring and probably protects the motor/basal body from shearing forces during rotation. The polypeptide is Flagellar L-ring protein (Aliivibrio fischeri (strain ATCC 700601 / ES114) (Vibrio fischeri)).